The primary structure comprises 440 residues: Ferredoxin--NADP reductase (440 aa).

Residues 17 to 75 (SRVFVYEVVGMRQNEETDQTNYPIRKSGSVFIRVPYNRMNQEMQRITRLGGKIVSIQTV) form the CpcD-like domain. The disordered stretch occupies residues 98–142 (AKSEGNGKATPVKTDSGAKGFAKPPAEEQLKKKDNKGNTMTQAKA). A compositionally biased stretch (basic and acidic residues) spans 122 to 133 (PAEEQLKKKDNK). The region spanning 155–279 (NAPFIGKVIS…TGPVGKEMLL (125 aa)) is the FAD-binding FR-type domain. FAD-binding positions include 214–217 (RLYS), 235–237 (CVR), Tyr241, 253–255 (VCS), and Thr294. NADP(+) is bound by residues Ser217 and Arg237. NADP(+) is bound by residues Thr294, 330-331 (VP), 360-361 (SR), 370-374 (RMYIQ), 399-400 (GL), and Glu438.

Belongs to the ferredoxin--NADP reductase type 1 family. The cofactor is FAD.

The protein localises to the cellular thylakoid membrane. The catalysed reaction is 2 reduced [2Fe-2S]-[ferredoxin] + NADP(+) + H(+) = 2 oxidized [2Fe-2S]-[ferredoxin] + NADPH. The chain is Ferredoxin--NADP reductase (petH) from Nostoc sp. (strain PCC 7120 / SAG 25.82 / UTEX 2576).